Here is a 126-residue protein sequence, read N- to C-terminus: C-type natriuretic peptide (126 aa).

The N-terminal stretch at 1 to 23 (MHLSQLIACALLLALLSLRPSEA) is a signal peptide. The interval 19–71 (RPSEAKPGTPPKVPRTPPGEELAEPQAAGGNQKKGDKTPGGGGANLKGDRSRL) is disordered. Residues 24 to 73 (KPGTPPKVPRTPPGEELAEPQAAGGNQKKGDKTPGGGGANLKGDRSRLLR) constitute a propeptide that is removed on maturation. Residues 26-35 (GTPPKVPRTP) are compositionally biased toward pro residues. Residues Cys-110 and Cys-126 are joined by a disulfide bond.

Belongs to the natriuretic peptide family. In terms of processing, degraded by IDE (in vitro). In terms of tissue distribution, expressed exclusively in brain.

It is found in the secreted. In terms of biological role, hormone which plays a role in endochondral ossification through regulation of cartilaginous growth plate chondrocytes proliferation and differentiation. May also be vasoactive and natriuretic. Acts by specifically binding and stimulating NPR2 to produce cGMP. Binds the clearance receptor NPR3. The protein is C-type natriuretic peptide (Nppc) of Rattus norvegicus (Rat).